Here is a 255-residue protein sequence, read N- to C-terminus: Proteasome subunit alpha (255 aa).

The disordered stretch occupies residues 224–255 (RLEELLGERGPAQHAPEEPADPEPEPPIAPPG).

The protein belongs to the peptidase T1A family. The 20S proteasome core is composed of 14 alpha and 14 beta subunits that assemble into four stacked heptameric rings, resulting in a barrel-shaped structure. The two inner rings, each composed of seven catalytic beta subunits, are sandwiched by two outer rings, each composed of seven alpha subunits. The catalytic chamber with the active sites is on the inside of the barrel. Has a gated structure, the ends of the cylinder being occluded by the N-termini of the alpha-subunits. Is capped by the proteasome-associated ATPase, ARC.

Its subcellular location is the cytoplasm. The protein operates within protein degradation; proteasomal Pup-dependent pathway. The formation of the proteasomal ATPase ARC-20S proteasome complex, likely via the docking of the C-termini of ARC into the intersubunit pockets in the alpha-rings, may trigger opening of the gate for substrate entry. Interconversion between the open-gate and close-gate conformations leads to a dynamic regulation of the 20S proteasome proteolysis activity. Component of the proteasome core, a large protease complex with broad specificity involved in protein degradation. The sequence is that of Proteasome subunit alpha from Nocardioides sp. (strain ATCC BAA-499 / JS614).